A 415-amino-acid polypeptide reads, in one-letter code: Probable glucan 1,3-beta-glucosidase A (415 aa).

The N-terminal stretch at 1-22 (MLSRLSQTALVALSLMTVLTEA) is a signal peptide. Residue glutamate 210 is the Proton donor of the active site. 2 disulfides stabilise this stretch: cysteine 290–cysteine 414 and cysteine 315–cysteine 341. Catalysis depends on glutamate 307, which acts as the Nucleophile. Positions 335–359 (SPRYGDCGNKRQGSSSGLSEQERSD) are disordered.

Belongs to the glycosyl hydrolase 5 (cellulase A) family. Monomer. It depends on Mn(2+) as a cofactor.

It localises to the secreted. The catalysed reaction is Successive hydrolysis of beta-D-glucose units from the non-reducing ends of (1-&gt;3)-beta-D-glucans, releasing alpha-glucose.. Its function is as follows. Beta-glucanases participate in the metabolism of beta-glucan, the main structural component of the cell wall. It could also function biosynthetically as a transglycosylase. This Aspergillus clavatus (strain ATCC 1007 / CBS 513.65 / DSM 816 / NCTC 3887 / NRRL 1 / QM 1276 / 107) protein is Probable glucan 1,3-beta-glucosidase A (exgA).